Consider the following 117-residue polypeptide: Small ribosomal subunit protein uS17 (117 aa).

The disordered stretch occupies residues 97–117 (AEGLAAAHAGEPETESAATDA).

It belongs to the universal ribosomal protein uS17 family. As to quaternary structure, part of the 30S ribosomal subunit.

Functionally, one of the primary rRNA binding proteins, it binds specifically to the 5'-end of 16S ribosomal RNA. This Rhodopirellula baltica (strain DSM 10527 / NCIMB 13988 / SH1) protein is Small ribosomal subunit protein uS17.